The sequence spans 285 residues: Phosphatase YwpJ (285 aa).

The active-site Nucleophile is Asp7. Position 7 (Asp7) interacts with Mg(2+). Residue Leu8 coordinates phosphate. Asp9 provides a ligand contact to Mg(2+). Phosphate-binding positions include 41-42 (TG) and Lys214. 2 residues coordinate Mg(2+): Asp237 and Ser238. Residues Asn240 and 282–283 (KH) each bind phosphate.

This sequence belongs to the HAD-like hydrolase superfamily. Cof family. Mg(2+) is required as a cofactor.

In terms of biological role, catalyzes the dephosphorylation of phosphorylated 5-6 carbon sugars and monophosphate nucleotides (NMP) in vitro. To a lesser extent, dephosphorylates flavin mononucleotide (FMN) in vitro. This Bacillus subtilis (strain 168) protein is Phosphatase YwpJ (ywpJ).